The primary structure comprises 417 residues: Phosphoglycerate kinase, cytosolic (417 aa).

Positions 23, 24, 25, 26, 39, 61, 62, 64, 65, 132, 168, and 169 each coordinate (2R)-3-phosphoglycerate. Positions 214 and 215 each coordinate ADP. Glycine 214 is a binding site for CDP. AMP contacts are provided by alanine 215 and lysine 216. Alanine 215 lines the ATP pocket. Alanine 215 lines the Mg(2+) pocket. Residue lysine 216 participates in (2R)-3-phosphoglycerate binding. Aspartate 219 serves as a coordination point for CDP. Position 219 (aspartate 219) interacts with Mg(2+). 2 residues coordinate ADP: lysine 220 and glycine 238. Lysine 220 lines the AMP pocket. Lysine 220 contacts ATP. Position 238 (glycine 238) interacts with CDP. AMP-binding residues include alanine 239 and alanine 311. Positions 239 and 311 each coordinate ATP. Residues alanine 311 and asparagine 335 each coordinate ADP. CDP is bound by residues glycine 336 and phenylalanine 341. Residues phenylalanine 341, glutamate 342, aspartate 374, and serine 375 each coordinate ADP. Glutamate 342 provides a ligand contact to AMP. Positions 342, 374, and 375 each coordinate ATP. Aspartate 374 is a binding site for Mg(2+).

It belongs to the phosphoglycerate kinase family. As to quaternary structure, monomer. It depends on Mg(2+) as a cofactor.

The protein resides in the cytoplasm. The catalysed reaction is (2R)-3-phosphoglycerate + ATP = (2R)-3-phospho-glyceroyl phosphate + ADP. It functions in the pathway carbohydrate degradation; glycolysis; pyruvate from D-glyceraldehyde 3-phosphate: step 2/5. The polypeptide is Phosphoglycerate kinase, cytosolic (PGKB) (Leishmania major).